Consider the following 144-residue polypeptide: Large ribosomal subunit protein uL15 (144 aa).

A disordered region spans residues 1 to 53 (MRLNTLSPAEGSKHASKRLGRGIGSGLGKTGGRGHKGQKSRSGGGVRRGFEGG). Gly residues predominate over residues 21-31 (RGIGSGLGKTG).

The protein belongs to the universal ribosomal protein uL15 family. Part of the 50S ribosomal subunit.

Functionally, binds to the 23S rRNA. In Edwardsiella ictaluri (strain 93-146), this protein is Large ribosomal subunit protein uL15.